The sequence spans 142 residues: Large ribosomal subunit protein uL13 (142 aa).

The protein belongs to the universal ribosomal protein uL13 family. Part of the 50S ribosomal subunit.

Its function is as follows. This protein is one of the early assembly proteins of the 50S ribosomal subunit, although it is not seen to bind rRNA by itself. It is important during the early stages of 50S assembly. This chain is Large ribosomal subunit protein uL13, found in Psychrobacter cryohalolentis (strain ATCC BAA-1226 / DSM 17306 / VKM B-2378 / K5).